The sequence spans 361 residues: UDP-3-O-acylglucosamine N-acyltransferase (361 aa).

Catalysis depends on H253, which acts as the Proton acceptor.

Belongs to the transferase hexapeptide repeat family. LpxD subfamily. Homotrimer.

The catalysed reaction is a UDP-3-O-[(3R)-3-hydroxyacyl]-alpha-D-glucosamine + a (3R)-hydroxyacyl-[ACP] = a UDP-2-N,3-O-bis[(3R)-3-hydroxyacyl]-alpha-D-glucosamine + holo-[ACP] + H(+). Its pathway is bacterial outer membrane biogenesis; LPS lipid A biosynthesis. Functionally, catalyzes the N-acylation of UDP-3-O-acylglucosamine using 3-hydroxyacyl-ACP as the acyl donor. Is involved in the biosynthesis of lipid A, a phosphorylated glycolipid that anchors the lipopolysaccharide to the outer membrane of the cell. The chain is UDP-3-O-acylglucosamine N-acyltransferase from Burkholderia thailandensis (strain ATCC 700388 / DSM 13276 / CCUG 48851 / CIP 106301 / E264).